The following is a 691-amino-acid chain: Elongation factor G (691 aa).

The tr-type G domain maps to 12 to 286 (KKLRNIGIMA…GVLEYLPSPL (275 aa)). Residues 21-28 (AHIDAGKT), 85-89 (DTPGH), and 139-142 (NKMD) each bind GTP.

Belongs to the TRAFAC class translation factor GTPase superfamily. Classic translation factor GTPase family. EF-G/EF-2 subfamily.

It localises to the cytoplasm. In terms of biological role, catalyzes the GTP-dependent ribosomal translocation step during translation elongation. During this step, the ribosome changes from the pre-translocational (PRE) to the post-translocational (POST) state as the newly formed A-site-bound peptidyl-tRNA and P-site-bound deacylated tRNA move to the P and E sites, respectively. Catalyzes the coordinated movement of the two tRNA molecules, the mRNA and conformational changes in the ribosome. This is Elongation factor G from Thermosipho melanesiensis (strain DSM 12029 / CIP 104789 / BI429).